Here is a 267-residue protein sequence, read N- to C-terminus: 2-keto-3-deoxy-L-rhamnonate aldolase (267 aa).

Residue H49 is the Proton acceptor of the active site. Q151 serves as a coordination point for substrate. E153 is a Mg(2+) binding site. Substrate-binding residues include A178 and D179. Residue D179 participates in Mg(2+) binding.

This sequence belongs to the HpcH/HpaI aldolase family. KDR aldolase subfamily. As to quaternary structure, homohexamer. Mg(2+) serves as cofactor.

The catalysed reaction is 2-dehydro-3-deoxy-L-rhamnonate = (S)-lactaldehyde + pyruvate. In terms of biological role, catalyzes the reversible retro-aldol cleavage of 2-keto-3-deoxy-L-rhamnonate (KDR) to pyruvate and lactaldehyde. This Salmonella typhi protein is 2-keto-3-deoxy-L-rhamnonate aldolase.